Reading from the N-terminus, the 473-residue chain is Ribulose bisphosphate carboxylase large chain (473 aa).

Residues N116 and T166 each contribute to the substrate site. Catalysis depends on K168, which acts as the Proton acceptor. K170 contacts substrate. Mg(2+)-binding residues include K194, D196, and E197. K194 is subject to N6-carboxylysine. Residue H287 is the Proton acceptor of the active site. Residues R288, H320, and S372 each contribute to the substrate site.

It belongs to the RuBisCO large chain family. Type I subfamily. As to quaternary structure, heterohexadecamer of 8 large chains and 8 small chains. It depends on Mg(2+) as a cofactor.

The catalysed reaction is 2 (2R)-3-phosphoglycerate + 2 H(+) = D-ribulose 1,5-bisphosphate + CO2 + H2O. It catalyses the reaction D-ribulose 1,5-bisphosphate + O2 = 2-phosphoglycolate + (2R)-3-phosphoglycerate + 2 H(+). RuBisCO catalyzes two reactions: the carboxylation of D-ribulose 1,5-bisphosphate, the primary event in carbon dioxide fixation, as well as the oxidative fragmentation of the pentose substrate. Both reactions occur simultaneously and in competition at the same active site. The chain is Ribulose bisphosphate carboxylase large chain from Methylococcus capsulatus (strain ATCC 33009 / NCIMB 11132 / Bath).